Here is a 62-residue protein sequence, read N- to C-terminus: Large ribosomal subunit protein eL24 (62 aa).

Positions 7, 10, 33, and 37 each coordinate Zn(2+). Residues 7–37 (CSFCGREIEPGTGIMYVKNDGSILWFCSRKC) form a C4-type zinc finger.

This sequence belongs to the eukaryotic ribosomal protein eL24 family. As to quaternary structure, part of the 50S ribosomal subunit. Forms a cluster with proteins L3 and L14. Requires Zn(2+) as cofactor.

In terms of biological role, binds to the 23S rRNA. In Staphylothermus marinus (strain ATCC 43588 / DSM 3639 / JCM 9404 / F1), this protein is Large ribosomal subunit protein eL24.